A 252-amino-acid chain; its full sequence is Pyrroloquinoline-quinone synthase (252 aa).

It belongs to the PqqC family.

It carries out the reaction 6-(2-amino-2-carboxyethyl)-7,8-dioxo-1,2,3,4,7,8-hexahydroquinoline-2,4-dicarboxylate + 3 O2 = pyrroloquinoline quinone + 2 H2O2 + 2 H2O + H(+). The protein operates within cofactor biosynthesis; pyrroloquinoline quinone biosynthesis. Its function is as follows. Ring cyclization and eight-electron oxidation of 3a-(2-amino-2-carboxyethyl)-4,5-dioxo-4,5,6,7,8,9-hexahydroquinoline-7,9-dicarboxylic-acid to PQQ. This Acinetobacter baumannii (strain AB307-0294) protein is Pyrroloquinoline-quinone synthase.